Reading from the N-terminus, the 361-residue chain is MSHQHPVYRRIVVKVGTNVITGRNGKLDPAILDSLTSQIAALMQDGVEVILVTSGAVSAGRGIVSLSGNLTPVETRQVLAATGQIRLINAYNDRFKKHGITGAQLLVTKGDFRDRQHYLNMRTCFEALLQQKIVPIVNENDAVAITELMFTDNDELSGLIASMLQVDANIILSNVDGLFDTQSEGNPVIEEIDPGTKNFSQYIRPGKSEFGRGGMLTKCNIAHKLSRLGITVHIANGTTPGILQTIAHGGKAGTKFIAQKPKQSRKRWVALSEGLEKGAVIINQGAIDALTSGQRATSLLPVGITGVEGSFQRGDIIRICSTDGKVIGYGMASCTAEKARSAMGQKGLKPVIHYDHLYLVP.

Position 14 (Lys14) interacts with ATP. Positions 54, 141, and 153 each coordinate substrate. One can recognise a PUA domain in the interval 277–355 (KGAVIINQGA…KGLKPVIHYD (79 aa)).

Belongs to the glutamate 5-kinase family.

It is found in the cytoplasm. The catalysed reaction is L-glutamate + ATP = L-glutamyl 5-phosphate + ADP. The protein operates within amino-acid biosynthesis; L-proline biosynthesis; L-glutamate 5-semialdehyde from L-glutamate: step 1/2. In terms of biological role, catalyzes the transfer of a phosphate group to glutamate to form L-glutamate 5-phosphate. This chain is Glutamate 5-kinase, found in Chlorobaculum tepidum (strain ATCC 49652 / DSM 12025 / NBRC 103806 / TLS) (Chlorobium tepidum).